The primary structure comprises 1036 residues: Isoleucine--tRNA ligase (1036 aa).

The short motif at 46 to 56 (PFATGLPHYGH) is the 'HIGH' region element. Residues 589–593 (KMSKR) carry the 'KMSKS' region motif. Lys592 provides a ligand contact to ATP.

It belongs to the class-I aminoacyl-tRNA synthetase family. IleS type 2 subfamily. As to quaternary structure, monomer. Zn(2+) serves as cofactor.

Its subcellular location is the cytoplasm. The enzyme catalyses tRNA(Ile) + L-isoleucine + ATP = L-isoleucyl-tRNA(Ile) + AMP + diphosphate. In terms of biological role, catalyzes the attachment of isoleucine to tRNA(Ile). As IleRS can inadvertently accommodate and process structurally similar amino acids such as valine, to avoid such errors it has two additional distinct tRNA(Ile)-dependent editing activities. One activity is designated as 'pretransfer' editing and involves the hydrolysis of activated Val-AMP. The other activity is designated 'posttransfer' editing and involves deacylation of mischarged Val-tRNA(Ile). In Chlamydia muridarum (strain MoPn / Nigg), this protein is Isoleucine--tRNA ligase.